The chain runs to 392 residues: Chorismate synthase (392 aa).

The NADP(+) site is built by R39 and R45. Residues 131-133, 255-256, G300, 315-319, and R341 each bind FMN; these read RSS, NA, and KPIPT.

It belongs to the chorismate synthase family. In terms of assembly, homotetramer. FMNH2 is required as a cofactor.

It catalyses the reaction 5-O-(1-carboxyvinyl)-3-phosphoshikimate = chorismate + phosphate. It functions in the pathway metabolic intermediate biosynthesis; chorismate biosynthesis; chorismate from D-erythrose 4-phosphate and phosphoenolpyruvate: step 7/7. Functionally, catalyzes the anti-1,4-elimination of the C-3 phosphate and the C-6 proR hydrogen from 5-enolpyruvylshikimate-3-phosphate (EPSP) to yield chorismate, which is the branch point compound that serves as the starting substrate for the three terminal pathways of aromatic amino acid biosynthesis. This reaction introduces a second double bond into the aromatic ring system. In Leuconostoc citreum (strain KM20), this protein is Chorismate synthase.